A 137-amino-acid polypeptide reads, in one-letter code: Large ribosomal subunit protein uL16c (137 aa).

It belongs to the universal ribosomal protein uL16 family. Part of the 50S ribosomal subunit.

It localises to the plastid. The polypeptide is Large ribosomal subunit protein uL16c (Cuscuta reflexa (Southern Asian dodder)).